Reading from the N-terminus, the 59-residue chain is Small ribosomal subunit protein bS21 (59 aa).

The segment at Arg35 to Phe59 is disordered. The span at Val43 to Phe59 shows a compositional bias: basic residues.

The protein belongs to the bacterial ribosomal protein bS21 family.

The sequence is that of Small ribosomal subunit protein bS21 from Finegoldia magna (strain ATCC 29328 / DSM 20472 / WAL 2508) (Peptostreptococcus magnus).